The sequence spans 276 residues: NADH-cytochrome b5 reductase 2 (276 aa).

In terms of domain architecture, FAD-binding FR-type spans 15-127 (EAKYPLPLIE…RGPRGRLFYH (113 aa)). Lysine 17 is subject to N6-acetyllysine. Residue tyrosine 18 is modified to Phosphotyrosine. FAD contacts are provided by residues 107-137 (ENMKIGETIFFRGPRGRLFYHGPGNLGIRPD) and 146-181 (LADHLGMIAGGTGITPMLQLIRHITKDPSDRTRMSL).

This sequence belongs to the flavoprotein pyridine nucleotide cytochrome reductase family. The cofactor is FAD. As to expression, restricted expression.

The enzyme catalyses 2 Fe(III)-[cytochrome b5] + NADH = 2 Fe(II)-[cytochrome b5] + NAD(+) + H(+). In terms of biological role, NADH-cytochrome b5 reductases are involved in desaturation and elongation of fatty acids, cholesterol biosynthesis, drug metabolism, and, in erythrocyte, methemoglobin reduction. Responsible for NADH-dependent lucigenin chemiluminescence in spermatozoa by reducing both lucigenin and 2-[4-iodophenyl]-3-[4-nitrophenyl]-5-[2,4-disulfophenyl]-2H tetrazolium monosodium salt (WST-1). This is NADH-cytochrome b5 reductase 2 from Homo sapiens (Human).